Reading from the N-terminus, the 201-residue chain is Adenylyl-sulfate kinase (201 aa).

35 to 42 lines the ATP pocket; it reads GLSGSGKS. Ser109 functions as the Phosphoserine intermediate in the catalytic mechanism.

This sequence belongs to the APS kinase family.

It carries out the reaction adenosine 5'-phosphosulfate + ATP = 3'-phosphoadenylyl sulfate + ADP + H(+). Its pathway is sulfur metabolism; hydrogen sulfide biosynthesis; sulfite from sulfate: step 2/3. Catalyzes the synthesis of activated sulfate. This is Adenylyl-sulfate kinase from Klebsiella pneumoniae (strain 342).